The chain runs to 594 residues: Probable Xaa-Pro aminopeptidase P (594 aa).

Mn(2+)-binding residues include Asp391, Asp402, Glu500, and Glu514.

The protein belongs to the peptidase M24B family. Mn(2+) serves as cofactor.

It catalyses the reaction Release of any N-terminal amino acid, including proline, that is linked to proline, even from a dipeptide or tripeptide.. Its function is as follows. Catalyzes the removal of a penultimate prolyl residue from the N-termini of peptides. This is Probable Xaa-Pro aminopeptidase P (ampp) from Pyrenophora tritici-repentis (strain Pt-1C-BFP) (Wheat tan spot fungus).